The following is a 58-amino-acid chain: Potassium channel toxin alpha-KTx 16.6 (58 aa).

The signal sequence occupies residues 1–22 (MKILSVLLIALIICSINICSEA). Intrachain disulfides connect C29/C50, C35/C55, and C39/C57.

Belongs to the short scorpion toxin superfamily. Potassium channel inhibitor family. Alpha-KTx 16 subfamily. As to expression, expressed by the venom gland.

The protein resides in the secreted. Functionally, inhibits potassium channel. This Buthus israelis (Israeli scorpion) protein is Potassium channel toxin alpha-KTx 16.6.